The chain runs to 226 residues: Flagellar L-ring protein (226 aa).

An N-terminal signal peptide occupies residues 1 to 15 (MKRLAVSILCLALAG). A lipid anchor (N-palmitoyl cysteine) is attached at Cys16. Cys16 is lipidated: S-diacylglycerol cysteine.

This sequence belongs to the FlgH family. The basal body constitutes a major portion of the flagellar organelle and consists of four rings (L,P,S, and M) mounted on a central rod.

It is found in the cell outer membrane. The protein localises to the bacterial flagellum basal body. Assembles around the rod to form the L-ring and probably protects the motor/basal body from shearing forces during rotation. In Geobacter metallireducens (strain ATCC 53774 / DSM 7210 / GS-15), this protein is Flagellar L-ring protein.